Reading from the N-terminus, the 364-residue chain is Glutamate 5-kinase (364 aa).

Lys7 serves as a coordination point for ATP. Positions 47, 134, and 146 each coordinate substrate. ATP-binding positions include Thr166 to Asp167 and Thr209 to Lys215. The region spanning Gln274 to Val349 is the PUA domain.

This sequence belongs to the glutamate 5-kinase family.

The protein localises to the cytoplasm. The enzyme catalyses L-glutamate + ATP = L-glutamyl 5-phosphate + ADP. The protein operates within amino-acid biosynthesis; L-proline biosynthesis; L-glutamate 5-semialdehyde from L-glutamate: step 1/2. In terms of biological role, catalyzes the transfer of a phosphate group to glutamate to form L-glutamate 5-phosphate. This is Glutamate 5-kinase from Prochlorococcus marinus (strain SARG / CCMP1375 / SS120).